Reading from the N-terminus, the 355-residue chain is Tryptophan--tRNA ligase (355 aa).

ATP contacts are provided by residues 13-15 (QPT) and 21-22 (GN). A 'HIGH' region motif is present at residues 14 to 22 (PTGNLHLGN). Asp-137 serves as a coordination point for L-tryptophan. Residues 149 to 151 (GED), Ile-208, and 217 to 221 (KMSKS) each bind ATP. The 'KMSKS' region signature appears at 217–221 (KMSKS).

This sequence belongs to the class-I aminoacyl-tRNA synthetase family. As to quaternary structure, homodimer.

The protein resides in the cytoplasm. It carries out the reaction tRNA(Trp) + L-tryptophan + ATP = L-tryptophyl-tRNA(Trp) + AMP + diphosphate + H(+). In terms of biological role, catalyzes the attachment of tryptophan to tRNA(Trp). The protein is Tryptophan--tRNA ligase of Mesorhizobium japonicum (strain LMG 29417 / CECT 9101 / MAFF 303099) (Mesorhizobium loti (strain MAFF 303099)).